The following is a 1014-amino-acid chain: Resistance to glucose repression protein 1 (1014 aa).

A disordered region spans residues 1-63 (MSTNLANYFA…AVQAKNDDDF (63 aa)). Ser-2 carries the post-translational modification N-acetylserine. The segment covering 11–34 (GKKDIENEHVNRNASHESNSKSDV) has biased composition (basic and acidic residues). Phosphothreonine is present on Thr-73. A Phosphoserine modification is found at Ser-75. Disordered stretches follow at residues 90-144 (LGRS…YLIP) and 236-270 (SEGNAQSEEEHDLERGYGSDDENSKRISMPTKNSK). Positions 104–115 (YDNSSNNSSSNS) are enriched in low complexity. 2 positions are modified to phosphoserine: Ser-242 and Ser-254. A compositionally biased stretch (basic and acidic residues) spans 247 to 260 (DLERGYGSDDENSK). Residues 277-283 (KPILKKR) carry the Nuclear localization signal motif. A Phosphoserine modification is found at Ser-311. The interval 340–463 (YPKESNSSVS…SEKSNKPTKN (124 aa)) is disordered. 4 stretches are compositionally biased toward polar residues: residues 343–352 (ESNSSVSLKS), 361–370 (STIPNPVGEN), 389–407 (HVQNNRSTAQSNKSILENS), and 415–455 (LDQN…NPSE). Ser-421 is subject to Phosphoserine. The residue at position 480 (Tyr-480) is a Phosphotyrosine. Ser-490 carries the phosphoserine modification. 2 disordered regions span residues 531 to 557 (EHLNKNTSDDDTSSQSSSSSHSDDEEH) and 570 to 591 (SDSGVHSPITDNSSVASSTTSR). Phosphoserine occurs at positions 570, 572, and 576. Over residues 578 to 591 (ITDNSSVASSTTSR) the composition is skewed to polar residues. The Nuclear localization signal motif lies at 595–599 (RPIIK). Phosphoserine occurs at positions 610, 614, and 680. The interval 690-897 (SKEKHVPQLH…QSFRIVNNTP (208 aa)) is disordered. The span at 722–740 (YSSSSDSEQQFIEDSQYNS) shows a compositional bias: low complexity. The span at 741-758 (SDDEEEEDDDDQEVDDNH) shows a compositional bias: acidic residues. 2 stretches are compositionally biased toward polar residues: residues 770–802 (LGKSGSTNSLYDLAQPSLSSATPQQKNPTNFTG) and 822–833 (RNSSSGNFIFNS). The Nuclear localization signal motif lies at 873 to 879 (KKKALPK). Positions 884–897 (SDSSQSFRIVNNTP) are enriched in polar residues. Thr-896 carries the phosphothreonine modification. Phosphoserine is present on Ser-898. The span at 959-972 (KKVDSVQTTRKEAS) shows a compositional bias: basic and acidic residues. Positions 959 to 982 (KKVDSVQTTRKEASLTDSSNESLH) are disordered. A Phosphoserine modification is found at Ser-980.

Interacts with SAK1.

It is found in the nucleus. Involved in RNA processing and negative regulation of glucose repression. Regulates the level of two antigens, P43 and P70. Binds to protein phosphatase type 1. Functions with REG2 and SNF1 protein kinase to regulate growth. Might regulate SNF1 directly or indirectly. This chain is Resistance to glucose repression protein 1 (REG1), found in Saccharomyces cerevisiae (strain ATCC 204508 / S288c) (Baker's yeast).